A 513-amino-acid chain; its full sequence is ATP synthase subunit alpha (513 aa).

169–176 (GDRQTGKT) provides a ligand contact to ATP.

Belongs to the ATPase alpha/beta chains family. In terms of assembly, F-type ATPases have 2 components, CF(1) - the catalytic core - and CF(0) - the membrane proton channel. CF(1) has five subunits: alpha(3), beta(3), gamma(1), delta(1), epsilon(1). CF(0) has three main subunits: a(1), b(2) and c(9-12). The alpha and beta chains form an alternating ring which encloses part of the gamma chain. CF(1) is attached to CF(0) by a central stalk formed by the gamma and epsilon chains, while a peripheral stalk is formed by the delta and b chains.

It localises to the cell inner membrane. It catalyses the reaction ATP + H2O + 4 H(+)(in) = ADP + phosphate + 5 H(+)(out). In terms of biological role, produces ATP from ADP in the presence of a proton gradient across the membrane. The alpha chain is a regulatory subunit. The protein is ATP synthase subunit alpha of Hydrogenovibrio crunogenus (strain DSM 25203 / XCL-2) (Thiomicrospira crunogena).